The following is a 402-amino-acid chain: Propionate kinase (402 aa).

Residues Asn-11 and Lys-18 each coordinate ATP. Asn-11 lines the Mg(2+) pocket. Arg-86 is a substrate binding site. Residue Asp-143 is the Proton donor/acceptor of the active site. Residues His-175, 203–207 (HLGNG), 278–280 (DLR), and 326–330 (GIGEN) contribute to the ATP site.

Belongs to the acetokinase family. TdcD subfamily. Homodimer. Requires Mg(2+) as cofactor.

The enzyme catalyses propanoate + ATP = propanoyl phosphate + ADP. Its pathway is amino-acid degradation; L-threonine degradation via propanoate pathway; propanoate from L-threonine: step 4/4. In terms of biological role, catalyzes the conversion of propionyl phosphate and ADP to propionate and ATP. The sequence is that of Propionate kinase from Edwardsiella piscicida.